A 200-amino-acid polypeptide reads, in one-letter code: Ankyrin repeat-containing protein YAR1 (200 aa).

2 ANK repeats span residues Ser-49–Ser-78 and Thr-92–Phe-121. Ser-78 carries the phosphoserine modification. Residues Val-152–Lys-173 form a disordered region. Positions Glu-153–Gln-162 are enriched in acidic residues. Residues Glu-164–Lys-173 show a composition bias toward polar residues.

In terms of biological role, required for normal rate of cell proliferation. The chain is Ankyrin repeat-containing protein YAR1 (YAR1) from Saccharomyces cerevisiae (strain ATCC 204508 / S288c) (Baker's yeast).